The chain runs to 700 residues: Protein no-on-transient A (700 aa).

The disordered stretch occupies residues 1-270; the sequence is MESAGKQDNN…GGGGPRGGED (270 aa). Low complexity-rich tracts occupy residues 9–29 and 54–69; these read NNATQQLPQRQQRGNQQANKN and GGPNAQNQNQNQNQNG. Gly residues predominate over residues 70–79; it reads GVTGGGGAVG. Low complexity-rich tracts occupy residues 80-89, 96-124, and 144-175; these read GPNQNKNFGN, GNRNRNNNRAGNQNRTFPGNNNPNQKPNN, and AAAGQNQANQNANKGQNQRQGQNQNQNQVHGQ. The segment covering 176-208 has biased composition (gly residues); it reads GNQGGPGNQGGAGNQGGQGNQGGAGNQGNGQGF. Serine 236 carries the phosphoserine modification. Residues 253–266 are compositionally biased toward gly residues; sequence MGGGGGGGGGGGPR. 2 consecutive RRM domains span residues 302-374 and 376-457; these read NRLY…FAPN and TILR…PMEV. Residues 505–616 are a coiled coil; that stretch reads NLFKTKQDAL…AQQLNSLLDQ (112 aa). Residues 568–582 are compositionally biased toward basic and acidic residues; it reads EMRKREEETMRRHQT. Disordered stretches follow at residues 568–591 and 677–700; these read EMRKREEETMRRHQTEMQSHMNRQ and MNQGGNQRGNNGGGNNVPWGRRRF. The segment covering 682 to 691 has biased composition (gly residues); that stretch reads NQRGNNGGGN.

Its function is as follows. Required for normal vision and courtship behavior in Drosophila. The sequence is that of Protein no-on-transient A (nonA) from Drosophila melanogaster (Fruit fly).